Reading from the N-terminus, the 612-residue chain is Zinc metalloproteinase-disintegrin-like berythractivase (612 aa).

Positions 1–20 (MIQVLLVIICLEAFPYQGSS) are cleaved as a signal peptide. Residues 21–187 (IILESGNVND…EPIKKASLLN (167 aa)) constitute a propeptide that is removed on maturation. The region spanning 200 to 396 (KYVEFVVVLD…NRPQCLLNKP (197 aa)) is the Peptidase M12B domain. Glu-203 serves as a coordination point for Ca(2+). N-linked (GlcNAc...) asparagine glycosylation occurs at Asn-260. Asp-287 provides a ligand contact to Ca(2+). Cystine bridges form between Cys-311–Cys-391, Cys-351–Cys-375, and Cys-353–Cys-358. His-336 contributes to the Zn(2+) binding site. The active site involves Glu-337. Positions 340 and 346 each coordinate Zn(2+). N-linked (GlcNAc...) asparagine glycosylation occurs at Asn-348. N-linked (GlcNAc...) asparagine glycosylation is present at Asn-374. Ca(2+) is bound by residues Cys-391, Asn-394, Val-406, Asn-409, Leu-411, Glu-413, Glu-416, and Asp-419. Positions 404–490 (PPVCGNELLE…DCPMDDFQRN (87 aa)) constitute a Disintegrin domain. Intrachain disulfides connect Cys-407-Cys-436, Cys-418-Cys-431, Cys-420-Cys-426, Cys-430-Cys-453, Cys-444-Cys-450, Cys-449-Cys-475, Cys-462-Cys-482, Cys-469-Cys-501, Cys-494-Cys-506, Cys-513-Cys-563, Cys-528-Cys-574, Cys-541-Cys-551, Cys-558-Cys-600, and Cys-594-Cys-605. The N-linked (GlcNAc...) asparagine glycan is linked to Asn-432. Residues 468-470 (DCD) carry the D/ECD-tripeptide motif. Ca(2+) is bound by residues Asp-470, Leu-471, Glu-473, and Asp-485.

It belongs to the venom metalloproteinase (M12B) family. P-III subfamily. P-IIIa sub-subfamily. Monomer. It depends on Zn(2+) as a cofactor. In terms of processing, highly glycosylated. As to expression, expressed by the venom gland.

It is found in the secreted. With respect to regulation, inhibited by EDTA and o-phenanthroline. Not inhibited by PMSF, benzamidine, irreversible serine-proteinase inhibitors and cysteine proteinase inhibitor E-64. Its function is as follows. Potent activator of prothrombin (F2). Does not elicit any hemorrhagic response. Barely inhibits collagen-induced platelet aggregation. Binds neither collagen, nor the jararhagin monoclonal antibody MAJar3. Hydrolyzes the Aalpha-chain of fibrin and fibrinogen, without affecting the Bbeta- and gamma-chains. Is capable of triggering endothelial pro-inflammatory and procoagulant cell responses, but fails to trigger apoptosis. Induces von Willebrand factor release, and the expression of both ICAM1 and E-selectin (SELE) (without increase in VCAM1) in endothelial cells (HUVEC). Is also able to up-regulate the synthesis of the coagulation factor TF (F3). Enhances nitric oxide (NO) generation, prostacyclin production and interleukin-8 release. The polypeptide is Zinc metalloproteinase-disintegrin-like berythractivase (Bothrops erythromelas (Caatinga lance head)).